The primary structure comprises 138 residues: ATP synthase epsilon chain (138 aa).

This sequence belongs to the ATPase epsilon chain family. F-type ATPases have 2 components, CF(1) - the catalytic core - and CF(0) - the membrane proton channel. CF(1) has five subunits: alpha(3), beta(3), gamma(1), delta(1), epsilon(1). CF(0) has three main subunits: a, b and c.

It is found in the cellular thylakoid membrane. In terms of biological role, produces ATP from ADP in the presence of a proton gradient across the membrane. The chain is ATP synthase epsilon chain from Cyanothece sp. (strain PCC 7425 / ATCC 29141).